The chain runs to 291 residues: Meteorin (291 aa).

Positions 1 to 21 (MLVAALLCALCCGLLAASARA) are cleaved as a signal peptide. 5 disulfides stabilise this stretch: C28–C49, C80–C116, C169–C240, C172–C264, and C182–C286.

Belongs to the meteorin family. As to quaternary structure, monomer.

It is found in the secreted. Its function is as follows. Involved in both glial cell differentiation and axonal network formation during neurogenesis. Promotes astrocyte differentiation and transforms cerebellar astrocytes into radial glia. Also induces axonal extension in small and intermediate neurons of sensory ganglia by activating nearby satellite glia. In Rattus norvegicus (Rat), this protein is Meteorin (Metrn).